Here is a 118-residue protein sequence, read N- to C-terminus: SPbeta prophage-derived uncharacterized protein YomS (118 aa).

The protein is SPbeta prophage-derived uncharacterized protein YomS (yomS) of Bacillus subtilis (strain 168).